The chain runs to 874 residues: Alanine--tRNA ligase (874 aa).

Residues histidine 562, histidine 566, cysteine 663, and histidine 667 each contribute to the Zn(2+) site.

It belongs to the class-II aminoacyl-tRNA synthetase family. The cofactor is Zn(2+).

The protein resides in the cytoplasm. It carries out the reaction tRNA(Ala) + L-alanine + ATP = L-alanyl-tRNA(Ala) + AMP + diphosphate. Catalyzes the attachment of alanine to tRNA(Ala) in a two-step reaction: alanine is first activated by ATP to form Ala-AMP and then transferred to the acceptor end of tRNA(Ala). Also edits incorrectly charged Ser-tRNA(Ala) and Gly-tRNA(Ala) via its editing domain. This is Alanine--tRNA ligase from Bordetella bronchiseptica (strain ATCC BAA-588 / NCTC 13252 / RB50) (Alcaligenes bronchisepticus).